Here is a 781-residue protein sequence, read N- to C-terminus: AP-3 complex subunit beta (781 aa).

HEAT repeat units lie at residues 113-151, 153-186, 187-224, 294-332, and 521-559; these read PNLALLSINSIQRSLSDSNPDVRALALKTLSDINIASLY, IILHSLKKTVIDSSEVVRCQVAMTLLKLFKEQGI, SIKDDVMPMLKSLLADSEPSVVSAALLLFQKAFAQELQ, DHDLNLFLSSLKKLLHSPNAMVIVAVSKAFYQLSSPKTF, and PRICPDVLRRLLPQFSKEHAHVRLQILNLAAKLLSHDVD. Disordered regions lie at residues 694–713 and 731–781; these read KPKRSASVSSVPSNTFTSSH and ARQS…ETTE. Positions 699–712 are enriched in polar residues; sequence ASVSSVPSNTFTSS. Acidic residues predominate over residues 746–758; that stretch reads STSEETDHTDDES. Residues 759–774 show a composition bias toward low complexity; that stretch reads GSSSGDESTESSYVSS.

Belongs to the adaptor complexes large subunit family. Adaptor protein complex 3 (AP-3) is a heterotetramer composed of 2 large adaptins (APL5 and APL6), a medium adaptin (APM3) and a small adaptin (APS3).

The protein localises to the golgi apparatus. Its subcellular location is the cytoplasmic vesicle. The protein resides in the clathrin-coated vesicle membrane. Functionally, part of the AP-3 complex, an adaptor-related complex which is not clathrin-associated. The complex is associated with the Golgi region as well as more peripheral structures. It facilitates the budding of vesicles from the Golgi membrane and may be directly involved in trafficking to the vacuole. In Eremothecium gossypii (strain ATCC 10895 / CBS 109.51 / FGSC 9923 / NRRL Y-1056) (Yeast), this protein is AP-3 complex subunit beta (APL6).